A 367-amino-acid polypeptide reads, in one-letter code: Putative methylthioribose-1-phosphate isomerase (367 aa).

Substrate contacts are provided by residues Arg-65–Ala-67, Arg-106, and Gln-218. Asp-259 (proton donor) is an active-site residue. Asn-269 to Lys-270 lines the substrate pocket.

Belongs to the eIF-2B alpha/beta/delta subunits family. MtnA subfamily.

It carries out the reaction 5-(methylsulfanyl)-alpha-D-ribose 1-phosphate = 5-(methylsulfanyl)-D-ribulose 1-phosphate. Catalyzes the interconversion of methylthioribose-1-phosphate (MTR-1-P) into methylthioribulose-1-phosphate (MTRu-1-P). The polypeptide is Putative methylthioribose-1-phosphate isomerase (Sulfolobus acidocaldarius (strain ATCC 33909 / DSM 639 / JCM 8929 / NBRC 15157 / NCIMB 11770)).